A 249-amino-acid chain; its full sequence is Cysteine desulfuration protein SufE (249 aa).

Cysteine 154 (cysteine persulfide intermediate) is an active-site residue.

It belongs to the SufE family. Monomer. Interacts with SufS; interaction enhances cysteine desulfurase activity of SufS. Proteolytically cleaved.

It localises to the plastid. The protein resides in the apicoplast. It participates in cofactor biosynthesis; iron-sulfur cluster biosynthesis. In terms of biological role, participates in sulfur mobilization (SUF) pathway for iron-sulfur (Fe-S) cluster biogenesis. Enhances cysteine desulfurase activity of SufS. Probably functions as a sulfur acceptor for SufS. The polypeptide is Cysteine desulfuration protein SufE (Plasmodium falciparum (isolate 3D7)).